Here is a 344-residue protein sequence, read N- to C-terminus: Protein L-Myc-1-A (344 aa).

Disordered regions lie at residues 100–162 (RLTT…DDEI) and 209–261 (PPEP…EDIV). 3 stretches are compositionally biased toward polar residues: residues 102 to 112 (TTASPRATNPQ), 123 to 133 (PGVNSIEQNAN), and 236 to 255 (PALQ…SGSS). The bHLH domain maps to 261–313 (VKKKNHNYLERKRRNDLRSRFLALREEVPSLTRSTKTPKVVVLSKATEFLKGL). Positions 313–341 (LVIQEQQLTAEKFKLWSRHQQLLRRISHL) are leucine-zipper.

Efficient DNA binding requires dimerization with another bHLH protein. Binds DNA as a heterodimer with MAX. As to expression, high levels in oocytes, modest levels in kidney and low levels in spleen.

The protein localises to the nucleus. In Xenopus laevis (African clawed frog), this protein is Protein L-Myc-1-A (mycl1-a).